The following is a 157-amino-acid chain: Large ribosomal subunit protein uL15 (157 aa).

Belongs to the universal ribosomal protein uL15 family. Part of the 50S ribosomal subunit.

Binds to the 23S rRNA. In Ehrlichia ruminantium (strain Gardel), this protein is Large ribosomal subunit protein uL15.